Here is a 62-residue protein sequence, read N- to C-terminus: Photosystem II reaction center protein Z (62 aa).

Helical transmembrane passes span 8–28 (TLFA…VVFA) and 41–61 (LSGL…NSFV).

Belongs to the PsbZ family. In terms of assembly, PSII is composed of 1 copy each of membrane proteins PsbA, PsbB, PsbC, PsbD, PsbE, PsbF, PsbH, PsbI, PsbJ, PsbK, PsbL, PsbM, PsbT, PsbY, PsbZ, Psb30/Ycf12, at least 3 peripheral proteins of the oxygen-evolving complex and a large number of cofactors. It forms dimeric complexes.

The protein localises to the plastid. Its subcellular location is the chloroplast thylakoid membrane. Functionally, may control the interaction of photosystem II (PSII) cores with the light-harvesting antenna, regulates electron flow through the 2 photosystem reaction centers. PSII is a light-driven water plastoquinone oxidoreductase, using light energy to abstract electrons from H(2)O, generating a proton gradient subsequently used for ATP formation. The chain is Photosystem II reaction center protein Z from Stigeoclonium helveticum (Green alga).